We begin with the raw amino-acid sequence, 618 residues long: Zinc finger protein 48 (618 aa).

An N-acetylmethionine modification is found at M1. 2 stretches are compositionally biased toward basic and acidic residues: residues 1 to 22 (MERA…EPQR) and 39 to 51 (EFEH…DLGF). Disordered regions lie at residues 1-51 (MERA…DLGF) and 78-109 (LWVQ…ASSD). K87 is covalently cross-linked (Glycyl lysine isopeptide (Lys-Gly) (interchain with G-Cter in SUMO2)). 2 C2H2-type zinc fingers span residues 112–134 (AVCG…QRTH) and 140–162 (YKCG…QRTH). The segment at 157 to 189 (KHQRTHSGEKPYRARPPAQGPPKIPRSRIPAGE) is disordered. K179 is covalently cross-linked (Glycyl lysine isopeptide (Lys-Gly) (interchain with G-Cter in SUMO2)). 2 consecutive C2H2-type zinc fingers follow at residues 192 to 214 (TICG…QRTH) and 220 to 242 (YKCG…QRTH). The disordered stretch occupies residues 235–271 (RIKHQRTHRGEQPPRPVVPRRQPSRAATAATQGPKAQ). Residue K269 forms a Glycyl lysine isopeptide (Lys-Gly) (interchain with G-Cter in SUMO2) linkage. 2 C2H2-type zinc fingers span residues 275 to 297 (YICT…QRSH) and 303 to 325 (FGCD…LRVH). K329 is covalently cross-linked (Glycyl lysine isopeptide (Lys-Gly) (interchain with G-Cter in SUMO2)). C2H2-type zinc fingers lie at residues 331 to 353 (YLCP…LRTH) and 359 to 381 (HACP…RLTH). The span at 392–414 (YPLPALIPSPPPPPLGTSPPLTP) shows a compositional bias: pro residues. Residues 392–457 (YPLPALIPSP…DKPHKCPECG (66 aa)) are disordered. Residues 415–432 (RSPSHSGEPFGLPGLEPE) are compositionally biased toward low complexity. Residues 451–473 (HKCPECGKGFRRSSDLVKHHRVH) form a C2H2-type 9 zinc finger. Residue K477 forms a Glycyl lysine isopeptide (Lys-Gly) (interchain with G-Cter in SUMO2) linkage. The C2H2-type 10 zinc finger occupies 479 to 501 (YLCPECGKGFADSSARVKHLRTH). A disordered region spans residues 500–540 (THRGERARPPPPSTLLRPHNPPGPVPMAPRPRVRAQPSGPS). Residues 508–528 (PPPPSTLLRPHNPPGPVPMAP) are compositionally biased toward pro residues. 2 C2H2-type zinc fingers span residues 543 to 565 (HVCG…RRTH) and 571 to 593 (YKCA…QRGH). K610 is covalently cross-linked (Glycyl lysine isopeptide (Lys-Gly) (interchain with G-Cter in SUMO2)).

The protein belongs to the krueppel C2H2-type zinc-finger protein family.

The protein localises to the nucleus. In terms of biological role, may be involved in transcriptional regulation. This Homo sapiens (Human) protein is Zinc finger protein 48 (ZNF48).